Here is a 651-residue protein sequence, read N- to C-terminus: MAGSAGLSSSPSSPAVRELCKNARDTFLEASRLLLTYADNILRNPYEEKYRSIRNGNPAFSTRLLPVRGAVECLFEMGFQEGETHMVFPKEASIEQLRKVRDLIAVERSSRLNESNQVHRSASSETVAITQAIAHQPSRPAGSVPTPDHQQPEPSLLQSLKMAADILTTLQSKCDHLILAYESTSLQQKALALIPLQQLKEKAQRKLAQATRLDKGEHVNEEDFLLLELLNWFKNDFFHWVDNLPCSRCGGQTEGKRDYLSPTDDDLRWNADRVENHYCSQCQFCNRFPRYNNPEKLLETRRGRCGEWANCFTLCCRAVGFEARYVRDWTDHVWTEVYSASQKRWLHCDPCENVCDKPLLYEIGWGKKLSYVIAFSKDEVVDVTWRYSCKHQEVLTRRTALSEAKLRETINAINKKKQQSLSEGRRKELLERTIVELAEFISPKTPKPGEFGGRTSGSMAWRIARGETGSEERKEVIFIPSEKEKASKLFHLMYNVVEDSYTRISNNNEQITGWGTGIWKAESIARKVETDWKMVYLARKEGSSSASISWKFECKSVGLKIDNISIRTSSQTFHSGRIKWRLYSPTAEVILVGDNSLSSYSDFCGATEVTLEATLSGGDGKAAWQHTQLFRNSLAGCGENCLEMIIKLADL.

The region spanning 29–90 is the PUB domain; that stretch reads EASRLLLTYA…EGETHMVFPK (62 aa). Zn(2+)-binding residues include C246, C249, C279, and C282. C305 (nucleophile) is an active-site residue. Residues H332 and D349 contribute to the active site. The PAW domain maps to 450–651; the sequence is EFGGRTSGSM…LEMIIKLADL (202 aa).

Belongs to the transglutaminase-like superfamily. PNGase family. Zn(2+) is required as a cofactor.

Its subcellular location is the cytoplasm. The enzyme catalyses Hydrolysis of an N(4)-(acetyl-beta-D-glucosaminyl)asparagine residue in which the glucosamine residue may be further glycosylated, to yield a (substituted) N-acetyl-beta-D-glucosaminylamine and a peptide containing an aspartate residue.. Its function is as follows. Specifically deglycosylates the denatured form of N-linked glycoproteins in the cytoplasm and assists their proteasome-mediated degradation. Cleaves the beta-aspartyl-glucosamine (GlcNAc) of the glycan and the amide side chain of Asn, converting Asn to Asp. Prefers proteins containing high-mannose over those bearing complex type oligosaccharides. Can recognize misfolded proteins in the endoplasmic reticulum that are exported to the cytosol to be destroyed and deglycosylate them, while it has no activity toward native proteins. Deglycosylation is a prerequisite for subsequent proteasome-mediated degradation of some, but not all, misfolded glycoproteins. This is Peptide-N(4)-(N-acetyl-beta-glucosaminyl)asparagine amidase (NGLY1) from Gallus gallus (Chicken).